Consider the following 305-residue polypeptide: uncharacterized protein (305 aa).

Helical transmembrane passes span 52–72 (TINL…SKII), 89–109 (IAGF…FIAA), and 120–140 (VIAI…GSLS).

This sequence belongs to the MscS (TC 1.A.23) family.

It localises to the cell membrane. This is an uncharacterized protein from Buchnera aphidicola subsp. Acyrthosiphon pisum (strain APS) (Acyrthosiphon pisum symbiotic bacterium).